The sequence spans 817 residues: tRNA(Met) cytidine acetyltransferase TmcA (817 aa).

ATP-binding positions include glutamine 265, 289–298 (GRGKSVSVGI), and arginine 439. Residues 469–664 (ELIRKMEVYL…YTAIVIKPIS (196 aa)) enclose the N-acetyltransferase domain. Residues 589-591 (IAT), 596-602 (MDLGLGS), glutamate 629, and arginine 636 contribute to the acetyl-CoA site.

The protein belongs to the RNA cytidine acetyltransferase family. TmcA subfamily.

It localises to the cytoplasm. The catalysed reaction is cytidine(34) in elongator tRNA(Met) + acetyl-CoA + ATP + H2O = N(4)-acetylcytidine(34) in elongator tRNA(Met) + ADP + phosphate + CoA + H(+). It carries out the reaction a cytidine in RNA + acetyl-CoA + ATP + H2O = an N(4)-acetylcytidine in RNA + ADP + phosphate + CoA + H(+). It catalyses the reaction a cytidine in tRNA + acetyl-CoA + ATP + H2O = an N(4)-acetylcytidine in tRNA + ADP + phosphate + CoA + H(+). The enzyme catalyses a cytidine in mRNA + acetyl-CoA + ATP + H2O = an N(4)-acetylcytidine in mRNA + ADP + phosphate + CoA + H(+). Functionally, catalyzes the formation of N(4)-acetylcytidine (ac(4)C) at the wobble position of tRNA(Met), by using acetyl-CoA as an acetyl donor and ATP (or GTP). Its function is as follows. Catalyzes the formation of N(4)-acetylcytidine (ac(4)C) sites in rRNA, tRNA, mRNA and non-coding (nc) RNA, almost always on the middle C of a CCG motif. In hyperthermophiles more acetylation is seen at higher temperatures. This Pyrococcus abyssi (strain GE5 / Orsay) protein is tRNA(Met) cytidine acetyltransferase TmcA.